The sequence spans 177 residues: Adenine phosphoribosyltransferase (177 aa).

Belongs to the purine/pyrimidine phosphoribosyltransferase family. In terms of assembly, homodimer.

Its subcellular location is the cytoplasm. It carries out the reaction AMP + diphosphate = 5-phospho-alpha-D-ribose 1-diphosphate + adenine. Its pathway is purine metabolism; AMP biosynthesis via salvage pathway; AMP from adenine: step 1/1. Functionally, catalyzes a salvage reaction resulting in the formation of AMP, that is energically less costly than de novo synthesis. The polypeptide is Adenine phosphoribosyltransferase (Rhodococcus jostii (strain RHA1)).